The primary structure comprises 242 residues: Polycomb group RING finger protein 3 (242 aa).

Residues C17–R56 form an RING-type zinc finger. Positions A115–H149 are disordered. Positions Q117–E140 are enriched in basic and acidic residues. Residues S132–L242 are interaction with BCORL1.

Component of a PRC1-like complex that contains PCGF3, RNF2 and RYBP. Interacts with CBX6, CBX7 and CBX8. Interacts with BCORL1.

It is found in the nucleus. The protein localises to the nucleoplasm. Its function is as follows. Component of a Polycomb group (PcG) multiprotein PRC1-like complex, a complex class required to maintain the transcriptionally repressive state of many genes, including Hox genes, throughout development. PcG PRC1 complex acts via chromatin remodeling and modification of histones; it mediates monoubiquitination of histone H2A 'Lys-119', rendering chromatin heritably changed in its expressibility. Within the PRC1-like complex, regulates RNF2 ubiquitin ligase activity. Plays a redundant role with PCGF5 as part of a PRC1-like complex that mediates monoubiquitination of histone H2A 'Lys-119' on the X chromosome and is required for normal silencing of one copy of the X chromosome in XX females. In Homo sapiens (Human), this protein is Polycomb group RING finger protein 3 (PCGF3).